A 705-amino-acid polypeptide reads, in one-letter code: Elongation factor G (705 aa).

Residues 8–290 form the tr-type G domain; it reads HRYRNIGIMA…GVIHLLPSPA (283 aa). Residues 17–24, 88–92, and 142–145 contribute to the GTP site; these read AHIDAGKT, DTPGH, and NKMD.

Belongs to the TRAFAC class translation factor GTPase superfamily. Classic translation factor GTPase family. EF-G/EF-2 subfamily.

It is found in the cytoplasm. Its function is as follows. Catalyzes the GTP-dependent ribosomal translocation step during translation elongation. During this step, the ribosome changes from the pre-translocational (PRE) to the post-translocational (POST) state as the newly formed A-site-bound peptidyl-tRNA and P-site-bound deacylated tRNA move to the P and E sites, respectively. Catalyzes the coordinated movement of the two tRNA molecules, the mRNA and conformational changes in the ribosome. The polypeptide is Elongation factor G (Xylella fastidiosa (strain 9a5c)).